The following is a 288-amino-acid chain: Serine/threonine-protein phosphatase PGAM5, mitochondrial (288 aa).

Residues 1–6 lie on the Mitochondrial matrix side of the membrane; it reads MAFRQA. A helical membrane pass occupies residues 7 to 29; that stretch reads LQLAACGLAGGSAAVLFSAVAVG. Over 30-288 the chain is Mitochondrial intermembrane; sequence KPRAGGDADT…FMPPDKITRS (259 aa). The segment at 76–81 is interaction with KEAP1; that stretch reads NVEFGE. Residue Ser86 is modified to Phosphoserine. N6-acetyllysine occurs at positions 115, 143, and 190.

Belongs to the phosphoglycerate mutase family. BPG-dependent PGAM subfamily. As to quaternary structure, dimer. Forms a ternary complex with NFE2L2 and KEAP1. Interacts with BCL2L1 and MAP3K5. Upon TNF-induced necrosis, forms in complex with RIPK1, RIPK3 and MLKL; the formation of this complex leads to PGAM5 phosphorylation. Isoform 2, but not isoform 1, interacts with DNM1L; this interaction leads to DNM1L dephosphorylation and activation and eventually to mitochondria fragmentation. In terms of processing, phosphorylated by the RIPK1/RIPK3 complex under necrotic conditions. This phosphorylation increases PGAM5 phosphatase activity. Post-translationally, proteolytically cleaved by PARL in response to loss of mitochondrial membrane potential.

Its subcellular location is the mitochondrion outer membrane. It localises to the mitochondrion inner membrane. The catalysed reaction is O-phospho-L-seryl-[protein] + H2O = L-seryl-[protein] + phosphate. The enzyme catalyses O-phospho-L-threonyl-[protein] + H2O = L-threonyl-[protein] + phosphate. In terms of biological role, mitochondrial serine/threonine phosphatase that dephosphorylates various substrates and thus plays a role in different biological processes including cellular senescence or mitophagy. Modulates cellular senescence by regulating mitochondrial dynamics. Mechanistically, participates in mitochondrial fission through dephosphorylating DNM1L/DRP1. Additionally, dephosphorylates MFN2 in a stress-sensitive manner and consequently protects it from ubiquitination and degradation to promote mitochondrial network formation. Regulates mitophagy independent of PARKIN by interacting with and dephosphorylating FUNDC1, which interacts with LC3. Regulates anti-oxidative response by forming a tertiary complex with KEAP1 and NRF2. Regulates necroptosis by acting as a RIPK3 target and recruiting the RIPK1-RIPK3-MLKL necrosis 'attack' complex to mitochondria. The protein is Serine/threonine-protein phosphatase PGAM5, mitochondrial (Pgam5) of Rattus norvegicus (Rat).